The following is a 75-amino-acid chain: Small ribosomal subunit protein bS18 (75 aa).

Belongs to the bacterial ribosomal protein bS18 family. Part of the 30S ribosomal subunit. Forms a tight heterodimer with protein bS6.

Functionally, binds as a heterodimer with protein bS6 to the central domain of the 16S rRNA, where it helps stabilize the platform of the 30S subunit. The protein is Small ribosomal subunit protein bS18 of Legionella pneumophila (strain Paris).